The following is a 918-amino-acid chain: DNA mismatch repair protein MutS (918 aa).

662-669 (GPNMAGKS) lines the ATP pocket.

Belongs to the DNA mismatch repair MutS family.

This protein is involved in the repair of mismatches in DNA. It is possible that it carries out the mismatch recognition step. This protein has a weak ATPase activity. This Sorangium cellulosum (strain So ce56) (Polyangium cellulosum (strain So ce56)) protein is DNA mismatch repair protein MutS.